The following is a 358-amino-acid chain: Adenosine deaminase (358 aa).

2 residues coordinate Zn(2+): His-14 and His-16. The substrate site is built by His-16, Asp-18, and Gly-183. Position 212 (His-212) interacts with Zn(2+). Glu-215 serves as the catalytic Proton donor. Asp-294 provides a ligand contact to Zn(2+). Asp-295 serves as a coordination point for substrate.

This sequence belongs to the metallo-dependent hydrolases superfamily. Adenosine and AMP deaminases family. Zn(2+) serves as cofactor.

The protein localises to the cell membrane. The protein resides in the cell junction. Its subcellular location is the cytoplasmic vesicle lumen. It localises to the cytoplasm. It is found in the lysosome. The catalysed reaction is adenosine + H2O + H(+) = inosine + NH4(+). It carries out the reaction 2'-deoxyadenosine + H2O + H(+) = 2'-deoxyinosine + NH4(+). Functionally, catalyzes the hydrolytic deamination of adenosine and 2-deoxyadenosine. Plays an important role in purine metabolism and in adenosine homeostasis. Modulates signaling by extracellular adenosine, and so contributes indirectly to cellular signaling events. May act as a positive regulator of T-cell coactivation. The protein is Adenosine deaminase (ada) of Xenopus tropicalis (Western clawed frog).